Consider the following 289-residue polypeptide: Oxaloacetate decarboxylase (289 aa).

Residue Ser-50 coordinates substrate. Asp-88 serves as a coordination point for Mg(2+). The substrate site is built by Arg-159 and His-235.

The protein belongs to the isocitrate lyase/PEP mutase superfamily. Oxaloacetate decarboxylase family. In terms of assembly, homotetramer; dimer of dimers. The cofactor is Mg(2+).

It catalyses the reaction oxaloacetate + H(+) = pyruvate + CO2. Functionally, catalyzes the decarboxylation of oxaloacetate into pyruvate. Seems to play a role in maintaining cellular concentrations of bicarbonate and pyruvate. In Pseudomonas putida (strain GB-1), this protein is Oxaloacetate decarboxylase.